We begin with the raw amino-acid sequence, 252 residues long: 3-dehydroquinate dehydratase (252 aa).

3-dehydroquinate is bound by residues Ser-21, 46–48, and Arg-82; that span reads EWR. Residue His-143 is the Proton donor/acceptor of the active site. The active-site Schiff-base intermediate with substrate is Lys-170. Positions 213, 232, and 236 each coordinate 3-dehydroquinate.

This sequence belongs to the type-I 3-dehydroquinase family. As to quaternary structure, homodimer.

The enzyme catalyses 3-dehydroquinate = 3-dehydroshikimate + H2O. It participates in metabolic intermediate biosynthesis; chorismate biosynthesis; chorismate from D-erythrose 4-phosphate and phosphoenolpyruvate: step 3/7. Functionally, involved in the third step of the chorismate pathway, which leads to the biosynthesis of aromatic amino acids. Catalyzes the cis-dehydration of 3-dehydroquinate (DHQ) and introduces the first double bond of the aromatic ring to yield 3-dehydroshikimate. This Escherichia coli O139:H28 (strain E24377A / ETEC) protein is 3-dehydroquinate dehydratase.